The sequence spans 245 residues: 1-(5-phosphoribosyl)-5-[(5-phosphoribosylamino)methylideneamino] imidazole-4-carboxamide isomerase (245 aa).

Residue Asp7 is the Proton acceptor of the active site. Residue Asp129 is the Proton donor of the active site.

This sequence belongs to the HisA/HisF family.

The protein resides in the cytoplasm. The enzyme catalyses 1-(5-phospho-beta-D-ribosyl)-5-[(5-phospho-beta-D-ribosylamino)methylideneamino]imidazole-4-carboxamide = 5-[(5-phospho-1-deoxy-D-ribulos-1-ylimino)methylamino]-1-(5-phospho-beta-D-ribosyl)imidazole-4-carboxamide. It functions in the pathway amino-acid biosynthesis; L-histidine biosynthesis; L-histidine from 5-phospho-alpha-D-ribose 1-diphosphate: step 4/9. This chain is 1-(5-phosphoribosyl)-5-[(5-phosphoribosylamino)methylideneamino] imidazole-4-carboxamide isomerase, found in Escherichia coli (strain SMS-3-5 / SECEC).